The primary structure comprises 137 residues: UPF0148 protein MJ0890 (137 aa).

Belongs to the UPF0148 family.

This is UPF0148 protein MJ0890 from Methanocaldococcus jannaschii (strain ATCC 43067 / DSM 2661 / JAL-1 / JCM 10045 / NBRC 100440) (Methanococcus jannaschii).